The following is a 240-amino-acid chain: Small ribosomal subunit protein uS2c (240 aa).

The protein belongs to the universal ribosomal protein uS2 family.

It is found in the plastid. It localises to the chloroplast. This Cycas taitungensis (Prince sago) protein is Small ribosomal subunit protein uS2c (rps2).